A 339-amino-acid chain; its full sequence is MGTITVVINEGPILLIRALHRATTNKKMFRSTVWRRFASTGEIAKAKLDEFLIYHKTDAKLKPFIYRPKNAQILLTKDIRDPKTREPLQPRPPVKPLSKQTLNDFIYSVEPNSTELLDWFKEWTGTSIRKRAIWTYISPIHVQKMLTASFFKIGKYAHMVGLLYGIEHKFLKAQNPSVFDIEHFFNTNIMCALHRNRLKDYKDAEIAQRKLQVAWKKVLNRKNNTGLANILVATLGRQIGFTPELTGLQPVDISLPDIPNSSSGAELKDLLSKYEGIYLIARTLLDIDQHNAQYLELQEFIRQYQNALSESSDPYDTHLKALGLLETPPPQESTEKEEK.

A mitochondrion-targeting transit peptide spans 1–37; it reads MGTITVVINEGPILLIRALHRATTNKKMFRSTVWRRF.

It belongs to the mitochondrion-specific ribosomal protein mS27 family. In terms of assembly, component of the mitochondrial small ribosomal subunit (mt-SSU). Mature yeast 74S mitochondrial ribosomes consist of a small (37S) and a large (54S) subunit. The 37S small subunit contains a 15S ribosomal RNA (15S mt-rRNA) and 34 different proteins. The 54S large subunit contains a 21S rRNA (21S mt-rRNA) and 46 different proteins.

The protein resides in the mitochondrion. In terms of biological role, component of the mitochondrial ribosome (mitoribosome), a dedicated translation machinery responsible for the synthesis of mitochondrial genome-encoded proteins, including at least some of the essential transmembrane subunits of the mitochondrial respiratory chain. The mitoribosomes are attached to the mitochondrial inner membrane and translation products are cotranslationally integrated into the membrane. The protein is Small ribosomal subunit protein mS27 (MRP13) of Saccharomyces cerevisiae (strain ATCC 204508 / S288c) (Baker's yeast).